We begin with the raw amino-acid sequence, 293 residues long: DegV domain-containing protein MG326 homolog (293 aa).

A DegV domain is found at 3 to 289 (TAIITDSTAS…IDAFSISLLL (287 aa)). Residues Thr62 and Ser94 each contribute to the hexadecanoate site.

Functionally, may bind long-chain fatty acids, such as palmitate, and may play a role in lipid transport or fatty acid metabolism. This is DegV domain-containing protein MG326 homolog from Mycoplasma pneumoniae (strain ATCC 29342 / M129 / Subtype 1) (Mycoplasmoides pneumoniae).